A 638-amino-acid polypeptide reads, in one-letter code: Chaperone protein DnaK 2 (638 aa).

A Phosphothreonine; by autocatalysis modification is found at threonine 199. The disordered stretch occupies residues alanine 604–valine 626. A compositionally biased stretch (low complexity) spans glutamate 613–aspartate 624.

This sequence belongs to the heat shock protein 70 family.

Acts as a chaperone. The protein is Chaperone protein DnaK 2 of Colwellia psychrerythraea (strain 34H / ATCC BAA-681) (Vibrio psychroerythus).